The primary structure comprises 377 residues: Stimulator of interferon genes protein 7 (377 aa).

The next 4 membrane-spanning stretches (helical) occupy residues 30–50, 57–77, 106–126, and 141–161; these read TAAI…FLAV, THFL…GELL, FTFD…LILC, and FAIL…LVGL.

The protein belongs to the STING family.

It is found in the membrane. In terms of biological role, facilitator of innate immune signaling that acts as a sensor of second messenger signals produced by cyclic GMP-AMP synthase-like receptors (cGLRs) and promotes the production of type I interferon. Innate immune response is triggered in response to nucleotides from viruses and bacteria delivered to the cytoplasm. Acts by binding cyclic dinucleotides: recognizes and binds a large variety of 2'-3'- and 3'-3' linked cyclic dinucleotides (2'-3'-cGAMP, 3'-3'-cGAMP, 2',3'-cUAMP, 3',3'-cUAMP and/or 3',3'-c-di-GMP) second messengers produced by cGLRs in response to nucleotides in the cytosol, such as double-stranded RNA (dsRNA). Upon binding to cyclic dinucleotides, oligomerizes and promotes the recruitment and subsequent activation of the transcription factor IRF3 to induce expression of type I interferon. The chain is Stimulator of interferon genes protein 7 from Stylophora pistillata (Smooth cauliflower coral).